A 348-amino-acid polypeptide reads, in one-letter code: Delta(6)-protoilludene synthase 18 (348 aa).

4 residues coordinate Mg(2+): Asp87, Asn223, Ser227, and Glu231. The short motif at 87-91 is the DDXXD motif element; that stretch reads DEYTD. The NSE/DTE motif motif lies at 223 to 231; the sequence is NDLVSYNRE. (2E,6E)-farnesyl diphosphate is bound by residues Arg311 and Tyr312.

It belongs to the terpene synthase family. The cofactor is Mg(2+).

The enzyme catalyses (2E,6E)-farnesyl diphosphate = Delta(6)-protoilludene + diphosphate. Its function is as follows. Terpene cyclase that catalyzes the cyclization of farnesyl diphosphate (FPP) to delta(6)-protoilludene. The sequence is that of Delta(6)-protoilludene synthase 18 from Postia placenta (strain ATCC 44394 / Madison 698-R) (Brown rot fungus).